We begin with the raw amino-acid sequence, 121 residues long: Ribosome-binding factor A (121 aa).

This sequence belongs to the RbfA family. Monomer. Binds 30S ribosomal subunits, but not 50S ribosomal subunits or 70S ribosomes.

It is found in the cytoplasm. Functionally, one of several proteins that assist in the late maturation steps of the functional core of the 30S ribosomal subunit. Associates with free 30S ribosomal subunits (but not with 30S subunits that are part of 70S ribosomes or polysomes). Required for efficient processing of 16S rRNA. May interact with the 5'-terminal helix region of 16S rRNA. The sequence is that of Ribosome-binding factor A from Lactobacillus acidophilus (strain ATCC 700396 / NCK56 / N2 / NCFM).